Reading from the N-terminus, the 453-residue chain is Aspartic proteinase PCS1 (453 aa).

An N-terminal signal peptide occupies residues 1 to 18; it reads MFSRFHALFLLLVLSVRT. Positions 19–57 are cleaved as a propeptide — activation peptide; the sequence is YKCVSSSSSSSSSFSFSSFSSSSSSQTLVLPLKTRITPT. Asn-70 and Asn-85 each carry an N-linked (GlcNAc...) asparagine glycan. One can recognise a Peptidase A1 domain in the interval 73–438; sequence LTVTLTVGTP…DLQRSRIGLA (366 aa). Residue Asp-91 is part of the active site. 4 N-linked (GlcNAc...) asparagine glycosylation sites follow: Asn-102, Asn-175, Asn-178, and Asn-243. Residue Asp-304 is part of the active site. Residues Asn-326 and Asn-395 are each glycosylated (N-linked (GlcNAc...) asparagine).

This sequence belongs to the peptidase A1 family. As to expression, expressed specifically in developing gametophytes and developing seeds.

It is found in the endoplasmic reticulum. Embryo-specific aspartic protease that limits programmed cell death during reproductive development. Possesses peptidase activity toward casein in vitro. This chain is Aspartic proteinase PCS1 (PCS1), found in Arabidopsis thaliana (Mouse-ear cress).